We begin with the raw amino-acid sequence, 184 residues long: Type-1 fimbrial protein, A chain (184 aa).

A signal peptide spans 1-23 (MKIKTLAIVVLSALSLSSTAALA). A disulfide bond links Cys46 and Cys86.

Belongs to the fimbrial protein family.

The protein resides in the fimbrium. Fimbriae (also called pili), polar filaments radiating from the surface of the bacterium to a length of 0.5-1.5 micrometers and numbering 100-300 per cell, enable bacteria to colonize the epithelium of specific host organs. This chain is Type-1 fimbrial protein, A chain, found in Escherichia coli.